We begin with the raw amino-acid sequence, 624 residues long: MRWVKLGRRVIMSRALSSRLNLELGNKLKGLVSDQFYDEALRLYKLKIHSLGTNGFTAILPSVIKACAFQQEPFLLGAQLHCLCLKAGADCDTVVSNSLISMYAKFSRKYAVRKVFDEMLHRDTVSYCSIINSCCQDGLLYEAMKLIKEMYFYGFIPKSELVASLLALCTRMGSSSKVARMFHALVLVDERMQESVLLSTALVDMYLKFDDHAAAFHVFDQMEVKNEVSWTAMISGCVANQNYEMGVDLFRAMQRENLRPNRVTLLSVLPACVELNYGSSLVKEIHGFSFRHGCHADERLTAAFMTMYCRCGNVSLSRVLFETSKVRDVVMWSSMISGYAETGDCSEVMNLLNQMRKEGIEANSVTLLAIVSACTNSTLLSFASTVHSQILKCGFMSHILLGNALIDMYAKCGSLSAAREVFYELTEKDLVSWSSMINAYGLHGHGSEALEIFKGMIKGGHEVDDMAFLAILSACNHAGLVEEAQTIFTQAGKYHMPVTLEHYACYINLLGRFGKIDDAFEVTINMPMKPSARIWSSLLSACETHGRLDVAGKIIANELMKSEPDNPANYVLLSKIHTESGNYHAAEEVRRVMQRRKLNKCYGFSKIEPELQIEDYQGKSWSPI.

A mitochondrion-targeting transit peptide spans 1 to 15; the sequence is MRWVKLGRRVIMSRA. PPR repeat units lie at residues 56 to 91, 92 to 122, 123 to 157, 158 to 192, 195 to 225, 226 to 260, 261 to 296, 297 to 327, 328 to 362, 363 to 397, 398 to 428, 429 to 463, 464 to 498, and 499 to 529; these read FTAI…GADC, DTVV…MLHR, DTVS…GFIP, KSEL…DERM, SVLL…MEVK, NEVS…NLRP, NRVT…GCHA, DERL…SKVR, DVVM…GIEA, NSVT…GFMS, HILL…LTEK, DLVS…GHEV, DDMA…HMPV, and TLEH…MPMK. A type E motif region spans residues 534-610; that stretch reads IWSSLLSACE…CYGFSKIEPE (77 aa).

The protein belongs to the PPR family. PCMP-E subfamily.

The protein resides in the mitochondrion. The sequence is that of Pentatricopeptide repeat-containing protein At4g31070, mitochondrial (PCMP-E7) from Arabidopsis thaliana (Mouse-ear cress).